The chain runs to 451 residues: BSD domain-containing protein 1 (451 aa).

Residues 146–198 (WLSRFSLEEKKGEIAELLATSPSIRALYTKMVPAAVSHSEFWQRYFYKVHRLE) enclose the BSD domain. 2 disordered regions span residues 252 to 296 (SAAL…SLVT) and 309 to 424 (LQTG…DLDM). A compositionally biased stretch (low complexity) spans 275–295 (PPELAPAEGSPSESSESVSLV). The segment covering 309 to 320 (LQTGVQPSGNRD) has biased composition (polar residues). The segment covering 365–388 (KEVESKAQGRTETLKEEGPTDLRV) has biased composition (basic and acidic residues). Residues 392–411 (NSDSGKSTPSNNGKKGSSTD) show a composition bias toward polar residues. The segment covering 412-424 (ISEDWEKDFDLDM) has biased composition (acidic residues).

This Gallus gallus (Chicken) protein is BSD domain-containing protein 1 (BSDC1).